We begin with the raw amino-acid sequence, 148 residues long: NADPH-dependent 7-cyano-7-deazaguanine reductase (148 aa).

The active-site Thioimide intermediate is Cys-50. Asp-57 functions as the Proton donor in the catalytic mechanism. Substrate contacts are provided by residues Val-72–Ser-74 and His-91–Glu-92.

It belongs to the GTP cyclohydrolase I family. QueF type 1 subfamily.

It is found in the cytoplasm. It catalyses the reaction 7-aminomethyl-7-carbaguanine + 2 NADP(+) = 7-cyano-7-deazaguanine + 2 NADPH + 3 H(+). The protein operates within tRNA modification; tRNA-queuosine biosynthesis. In terms of biological role, catalyzes the NADPH-dependent reduction of 7-cyano-7-deazaguanine (preQ0) to 7-aminomethyl-7-deazaguanine (preQ1). This chain is NADPH-dependent 7-cyano-7-deazaguanine reductase, found in Helicobacter pylori (strain J99 / ATCC 700824) (Campylobacter pylori J99).